We begin with the raw amino-acid sequence, 355 residues long: Uroporphyrinogen decarboxylase (355 aa).

Substrate contacts are provided by residues 27–31 (RQAGR), aspartate 77, tyrosine 154, threonine 209, and histidine 328.

The protein belongs to the uroporphyrinogen decarboxylase family. As to quaternary structure, homodimer.

It localises to the cytoplasm. It catalyses the reaction uroporphyrinogen III + 4 H(+) = coproporphyrinogen III + 4 CO2. The protein operates within porphyrin-containing compound metabolism; protoporphyrin-IX biosynthesis; coproporphyrinogen-III from 5-aminolevulinate: step 4/4. In terms of biological role, catalyzes the decarboxylation of four acetate groups of uroporphyrinogen-III to yield coproporphyrinogen-III. The polypeptide is Uroporphyrinogen decarboxylase (Aliivibrio salmonicida (strain LFI1238) (Vibrio salmonicida (strain LFI1238))).